The sequence spans 142 residues: Mediator of RNA polymerase II transcription subunit 9 (142 aa).

The segment at 1 to 58 is disordered; sequence MASSGVAGGRQAEDTLQPPPELLPESKPPPPPQPLPVAALPPPAAPRPQSPAGAKEEN. Ala-2 carries the post-translational modification N-acetylalanine. Positions 17–49 are enriched in pro residues; that stretch reads QPPPELLPESKPPPPPQPLPVAALPPPAAPRPQ. A coiled-coil region spans residues 78–134; the sequence is DLHQDLNALKTKFQELRKLIGTMPGIHVSPEQQQQQLHSLREQVRTKNELLQKYKSL. Position 106 is a phosphoserine (Ser-106).

This sequence belongs to the Mediator complex subunit 9 family. In terms of assembly, component of the Mediator complex, which is composed of MED1, MED4, MED6, MED7, MED8, MED9, MED10, MED11, MED12, MED13, MED13L, MED14, MED15, MED16, MED17, MED18, MED19, MED20, MED21, MED22, MED23, MED24, MED25, MED26, MED27, MED29, MED30, MED31, CCNC, CDK8 and CDC2L6/CDK11. The MED12, MED13, CCNC and CDK8 subunits form a distinct module termed the CDK8 module. Mediator containing the CDK8 module is less active than Mediator lacking this module in supporting transcriptional activation. Individual preparations of the Mediator complex lacking one or more distinct subunits have been variously termed ARC, CRSP, DRIP, PC2, SMCC and TRAP.

The protein resides in the nucleus. Component of the Mediator complex, a coactivator involved in the regulated transcription of nearly all RNA polymerase II-dependent genes. Mediator functions as a bridge to convey information from gene-specific regulatory proteins to the basal RNA polymerase II transcription machinery. Mediator is recruited to promoters by direct interactions with regulatory proteins and serves as a scaffold for the assembly of a functional preinitiation complex with RNA polymerase II and the general transcription factors. In Mus musculus (Mouse), this protein is Mediator of RNA polymerase II transcription subunit 9 (Med9).